The following is a 347-amino-acid chain: Dehydratase asqC (347 aa).

The N-terminal stretch at 1-18 (MRPAILAAFSTLPAAAKA) is a signal peptide. Asn51, Asn103, Asn131, Asn143, Asn215, Asn264, and Asn281 each carry an N-linked (GlcNAc...) asparagine glycan.

The enzyme catalyses [(1'E)-5'-(3',3'-dimethyloxiran-2'-yl)-3'-hydroxy-3'-methylpent-1'-en-1'-yl]-quinolinone B = (1'E,3'E)-5-(3,3-dimethyloxiran-2-yl)-3-methylhexa-1,3-dienyl-quinolinone B + H2O. It participates in secondary metabolite biosynthesis. Its pathway is alkaloid biosynthesis. It functions in the pathway mycotoxin biosynthesis. In terms of biological role, dehydratase; part of the gene cluster that mediates the biosynthesis of the aspoquinolone mycotoxins. Within the pathway, the dehydratase asqC catalyzes the dehydratation of the epoxide at C-3 to produce (1'E,3'E)-5-(3,3-dimethyloxiran-2-yl)-3-methylhexa-1,3-dienyl-quinolinone B. The first step of the pathway is catalyzed by the nonribosomal peptide synthetase asqK that condenses anthranilic acid and O-methyl-L-tyrosine to produce 4'-methoxycyclopeptin. 4'-methoxycyclopeptin is then converted to 4'-methoxydehydrocyclopeptin by the ketoglutarate-dependent dioxygenase asqJ. AsqJ also converts its first product 4'-methoxydehydrocyclopeptin to 4'-methoxycyclopenin. The following conversion of 4'-methoxycyclopenin into 4'-methoxyviridicatin is catalyzed by the cyclopenase asqI. 4'-methoxyviridicatin is the precursor of quinolone natural products, and is further converted to quinolinone B. The prenyltransferase asqH1 then catalyzes the canonical Friedel-Crafts alkylation of quinolinone B with dimethylallyl cation to yield dimethylallyl quinolone, which is subjected to FAD-dependent dehydrogenation by the FAD-linked oxidoreductase asqF to yield conjugated aryl diene. The delta(3') double bond then serves as the site of the second alkylation with DMAPP catalyzed by the prenyltransferase asqH2 to yield a carbenium ion intermediate, which can be attacked by H(2)O to yield a styrenyl quinolone containing a C3'-hydroxyprenyl chain. The FAD-dependent monooxygenase asqG performs epoxidation of the terminal C7'-C8' olefin. Finally, after dehydratation of the epoxide at C3 by asqC, the quinolone epoxide rearrangement protein asqO catalyzes an enzymatic 3-exo-tet cyclization to yield the cyclopropyl-THF ring system in aspoquinolone. The chain is Dehydratase asqC from Emericella nidulans (strain FGSC A4 / ATCC 38163 / CBS 112.46 / NRRL 194 / M139) (Aspergillus nidulans).